Consider the following 119-residue polypeptide: NADH-quinone oxidoreductase subunit 7 (119 aa).

3 helical membrane-spanning segments follow: residues 11-31 (LIYV…GALL), 59-79 (VHFY…AFLW), and 88-108 (LGLY…VGFL).

This sequence belongs to the complex I subunit 3 family. As to quaternary structure, NDH-1 is composed of 15 different subunits, Nqo1 to Nqo15. The complex has a L-shaped structure, with the hydrophobic arm (subunits Nqo7, Nqo8 and Nqo10 to Nqo14) embedded in the membrane and the hydrophilic peripheral arm (subunits Nqo1 to Nqo6, Nqo9 and Nqo15) protruding into the bacterial cytoplasm. The hydrophilic domain contains all the redox centers.

The protein localises to the cell inner membrane. It catalyses the reaction a quinone + NADH + 5 H(+)(in) = a quinol + NAD(+) + 4 H(+)(out). Its function is as follows. NDH-1 shuttles electrons from NADH, via FMN and iron-sulfur (Fe-S) centers, to quinones in the respiratory chain. The immediate electron acceptor for the enzyme in this species is menaquinone. Couples the redox reaction to proton translocation (for every two electrons transferred, four hydrogen ions are translocated across the cytoplasmic membrane), and thus conserves the redox energy in a proton gradient required for the synthesis of ATP. The chain is NADH-quinone oxidoreductase subunit 7 (nqo7) from Thermus thermophilus (strain ATCC 27634 / DSM 579 / HB8).